A 377-amino-acid polypeptide reads, in one-letter code: Ribosomal RNA large subunit methyltransferase G (377 aa).

The protein belongs to the methyltransferase superfamily. RlmG family.

The protein localises to the cytoplasm. The enzyme catalyses guanosine(1835) in 23S rRNA + S-adenosyl-L-methionine = N(2)-methylguanosine(1835) in 23S rRNA + S-adenosyl-L-homocysteine + H(+). Functionally, specifically methylates the guanine in position 1835 (m2G1835) of 23S rRNA. The protein is Ribosomal RNA large subunit methyltransferase G of Shewanella sp. (strain MR-4).